A 92-amino-acid chain; its full sequence is Small ribosomal subunit protein uS19 (92 aa).

The protein belongs to the universal ribosomal protein uS19 family.

Its function is as follows. Protein S19 forms a complex with S13 that binds strongly to the 16S ribosomal RNA. The polypeptide is Small ribosomal subunit protein uS19 (Sulfurovum sp. (strain NBC37-1)).